Reading from the N-terminus, the 785-residue chain is MAEVESPLKLSGAPPPPEGVGGGHCSEISTELIRSLTELQELEAVYERLCGEEKAVEKELDALLEQQNTIESKMVTLHRMGPSLQLIEGDAKQLAGMITFTCSLAENVSSKVRQLDLAKNRLYQAIQRADDILDLKFCMDGVQTALRNEDYEQAAAHIHRYLCLDKSVIELSRQGKEGSMIDANLKLLQEAEQRLKAIVAEKFAIATKEGDLPQVERFFKIFPLLGLHEDGLSKFSEYLCKQVASKAEENLLLVLGSDMSDRRAAVIFADTLTLLFEGIARIVETHQPIVETYYGPGRLFTLIKYLQVECDTQVEKVVNKFIKQRDYHQQFRLVQSNLMRNSATEKIEPRELDPVLTEVTLMNARSELYLRFLRKRISADFEVGDSMASEEVKQEHQKCLDKLLNNCLLSCTMQELIGFYITMEEYFMRETVNKAVALDTYEKGQLTSSMVDDVFYIVKKCIGRALSSSNIDCLCAMINLATRELEADFRDVLCNKLRMGFPATTLQDIQRGVTSAVNIMHSSLQQGKFDTKGIESTDEAKLSFLVTLNNVEVCSENISTLKKTLESDCTKLFSQGIGGEQAQAKFDSCLSDLAAVSNKFRDLLQEGLAELNSSAVKPQVQPWINTFLSVSHSIEEEEFNDYEANDPWVQQFILNLEQQMAEFKASLSPVIYDSLTGLMTSLVAVELEKVVLKSTFNRLGGLQFDKELRSLIAYLTTVTTWTIRDKFARLSQMATILNLERVTEILDYWGANSGPLTWRLTPAEVRQVLALRIDFRNEDIKRLRL.

The interval Met-1–His-24 is disordered. Ala-2 is modified (N-acetylalanine). Positions Ala-2 to Leu-84 are interaction with SCFD1. Ser-6 carries the post-translational modification Phosphoserine. Positions Gln-85–Gln-153 are interaction with STX5. The segment at Pro-618–Glu-740 is d domain. An e domain; essential for proper cell surface glycosylation region spans residues Arg-741–Leu-785.

It belongs to the COG4 family. As to quaternary structure, monomer. Component of the conserved oligomeric Golgi (COG) complex which is composed of eight different subunits and is required for normal Golgi morphology and localization. Mediates interaction of SCFD1 with the COG complex. Interacts with STX5.

The protein resides in the cytoplasm. It is found in the cytosol. The protein localises to the golgi apparatus membrane. Required for normal Golgi function. Plays a role in SNARE-pin assembly and Golgi-to-ER retrograde transport via its interaction with SCFD1. The chain is Conserved oligomeric Golgi complex subunit 4 (Cog4) from Mus musculus (Mouse).